Consider the following 181-residue polypeptide: Ubiquitin-conjugating enzyme E2 19 (181 aa).

Residues 1 to 10 (MATVNGYTGN) show a composition bias toward polar residues. The segment at 1–33 (MATVNGYTGNTPAATTPAATGSKQSAPPTKTVD) is disordered. Low complexity predominate over residues 11–20 (TPAATTPAAT). The UBC core domain maps to 36-181 (SVLKRLQSEL…VEKLYKPLNA (146 aa)). The active-site Glycyl thioester intermediate is the Cys120.

It belongs to the ubiquitin-conjugating enzyme family. As to quaternary structure, interacts with OR. Binds to LOT1. In terms of tissue distribution, expressed in all tissues with cell division activities and in mature leaves.

The protein resides in the cytoplasm. It is found in the nucleus. The catalysed reaction is S-ubiquitinyl-[E1 ubiquitin-activating enzyme]-L-cysteine + [E2 ubiquitin-conjugating enzyme]-L-cysteine = [E1 ubiquitin-activating enzyme]-L-cysteine + S-ubiquitinyl-[E2 ubiquitin-conjugating enzyme]-L-cysteine.. The protein operates within protein modification; protein ubiquitination. In terms of biological role, accepts the ubiquitin from the E1 complex and catalyzes its covalent attachment to other proteins. Part of the anaphase-promoting complex (APC). May have a key function during cell cycle and be involved in cyclin B1 degradation. Triggers OR ubiquitination that mediates its subsequent nuclear localization. Involved in the repression of early light-induced proteins (ELIPs, e.g. ELIP1 and ELIP2) expression, probably via OR nuclear relocalization. This chain is Ubiquitin-conjugating enzyme E2 19, found in Arabidopsis thaliana (Mouse-ear cress).